A 1125-amino-acid chain; its full sequence is Phytochrome A (1125 aa).

Low complexity-rich tracts occupy residues 1-14 and 39-48; these read MSSSRPSHSSSNSA and SGSSFDYSSS. Disordered stretches follow at residues 1-22 and 38-64; these read MSSSRPSHSSSNSARSRHSARI and ESGSSFDYSSSVRVTDSVGGDQPPRSD. The GAF domain occupies 218 to 401; sequence SMERLCDTMV…VFAIHVNKEL (184 aa). A phytochromobilin-binding site is contributed by Cys-323. 2 PAS domains span residues 617–687 and 750–821; these read VTSE…LQGK and DYKA…VNLG. Positions 901–1117 constitute a Histidine kinase domain; it reads YLKKQIWNPL…SFIISVELAG (217 aa).

The protein belongs to the phytochrome family. Homodimer. Post-translationally, contains one covalently linked phytochromobilin chromophore.

Regulatory photoreceptor which exists in two forms that are reversibly interconvertible by light: the Pr form that absorbs maximally in the red region of the spectrum and the Pfr form that absorbs maximally in the far-red region. Photoconversion of Pr to Pfr induces an array of morphogenic responses, whereas reconversion of Pfr to Pr cancels the induction of those responses. Pfr controls the expression of a number of nuclear genes including those encoding the small subunit of ribulose-bisphosphate carboxylase, chlorophyll A/B binding protein, protochlorophyllide reductase, rRNA, etc. It also controls the expression of its own gene(s) in a negative feedback fashion. The chain is Phytochrome A (PHYA) from Populus tremuloides (Quaking aspen).